The sequence spans 182 residues: Large ribosomal subunit protein uL6 (182 aa).

Belongs to the universal ribosomal protein uL6 family. In terms of assembly, part of the 50S ribosomal subunit.

Functionally, this protein binds to the 23S rRNA, and is important in its secondary structure. It is located near the subunit interface in the base of the L7/L12 stalk, and near the tRNA binding site of the peptidyltransferase center. This chain is Large ribosomal subunit protein uL6, found in Haloquadratum walsbyi (strain DSM 16790 / HBSQ001).